Reading from the N-terminus, the 167-residue chain is NADH-quinone oxidoreductase subunit I 1 (167 aa).

2 4Fe-4S ferredoxin-type domains span residues Leu52–Ala82 and Lys98–Gly127. 8 residues coordinate [4Fe-4S] cluster: Cys62, Cys65, Cys68, Cys72, Cys107, Cys110, Cys113, and Cys117. Residues Pro148–His167 form a disordered region.

It belongs to the complex I 23 kDa subunit family. In terms of assembly, NDH-1 is composed of 14 different subunits. Subunits NuoA, H, J, K, L, M, N constitute the membrane sector of the complex. It depends on [4Fe-4S] cluster as a cofactor.

The protein resides in the cell inner membrane. The enzyme catalyses a quinone + NADH + 5 H(+)(in) = a quinol + NAD(+) + 4 H(+)(out). Its function is as follows. NDH-1 shuttles electrons from NADH, via FMN and iron-sulfur (Fe-S) centers, to quinones in the respiratory chain. The immediate electron acceptor for the enzyme in this species is believed to be ubiquinone. Couples the redox reaction to proton translocation (for every two electrons transferred, four hydrogen ions are translocated across the cytoplasmic membrane), and thus conserves the redox energy in a proton gradient. In Solibacter usitatus (strain Ellin6076), this protein is NADH-quinone oxidoreductase subunit I 1.